Consider the following 406-residue polypeptide: Phosphopentomutase (406 aa).

Mn(2+) contacts are provided by D10, D305, H310, D346, H347, and H358.

This sequence belongs to the phosphopentomutase family. Mn(2+) serves as cofactor.

It is found in the cytoplasm. It carries out the reaction 2-deoxy-alpha-D-ribose 1-phosphate = 2-deoxy-D-ribose 5-phosphate. It catalyses the reaction alpha-D-ribose 1-phosphate = D-ribose 5-phosphate. The protein operates within carbohydrate degradation; 2-deoxy-D-ribose 1-phosphate degradation; D-glyceraldehyde 3-phosphate and acetaldehyde from 2-deoxy-alpha-D-ribose 1-phosphate: step 1/2. In terms of biological role, isomerase that catalyzes the conversion of deoxy-ribose 1-phosphate (dRib-1-P) and ribose 1-phosphate (Rib-1-P) to deoxy-ribose 5-phosphate (dRib-5-P) and ribose 5-phosphate (Rib-5-P), respectively. In Rhizobium leguminosarum bv. trifolii (strain WSM2304), this protein is Phosphopentomutase.